Reading from the N-terminus, the 306-residue chain is Manganese-binding lipoprotein MntA (306 aa).

A signal peptide spans 1-18 (MRQGLMAAVLFATFALTG). The N-palmitoyl cysteine moiety is linked to residue Cys19. Cys19 is lipidated: S-diacylglycerol cysteine. Residues His66, His132, His198, and Asp278 each contribute to the Mn(2+) site.

It belongs to the bacterial solute-binding protein 9 family. The complex is probably composed of two ATP-binding proteins (MntB), two transmembrane proteins (MntC and MntD) and a solute-binding protein (MntA). Interacts with FloT.

The protein localises to the cell membrane. Its subcellular location is the membrane raft. Probably part of ATP-binding cassette (ABC) transport system MntABCD involved in manganese import. Binds manganese and delivers it to the membrane permease for translocation into the cytoplasm. The protein is Manganese-binding lipoprotein MntA of Bacillus subtilis (strain 168).